We begin with the raw amino-acid sequence, 139 residues long: Peptide methionine sulfoxide reductase MsrB (139 aa).

In terms of domain architecture, MsrB spans 8–130 (DQEWRQQLTD…NSASLRFHSA (123 aa)). Residues C47, C50, C96, and C99 each coordinate Zn(2+). C119 functions as the Nucleophile in the catalytic mechanism.

The protein belongs to the MsrB Met sulfoxide reductase family. Requires Zn(2+) as cofactor.

It catalyses the reaction L-methionyl-[protein] + [thioredoxin]-disulfide + H2O = L-methionyl-(R)-S-oxide-[protein] + [thioredoxin]-dithiol. The protein is Peptide methionine sulfoxide reductase MsrB of Hahella chejuensis (strain KCTC 2396).